The sequence spans 308 residues: MKASKQFRHQRRIVDGVLLLDKPRGLTSNAALQTARRLLNAAKAGHTGTLDPMATGLLPLTLGEATKFSQMLLDADKAYEATVRLGIETDTGDAEGAAIATAPVHVTDDSIRQALAALTGEIEQVPPMYSALKRDGKPLYEYARAGIEVERAARPVTIHSLELLGVEGDSLRIRVDCSKGTYVRTLAIDLGRLLGCGGHLTELRRTRIGPFNVDEAVTLTALEALPAESRVGLLAPVDALVGHLPRIELDAFQAGLLLQGRVLAAPCGAAGLVRIYGEGRYLGLGECDGNGTLSPKRLVSTVATAQQS.

The Nucleophile role is filled by Asp-51.

Belongs to the pseudouridine synthase TruB family. Type 1 subfamily.

The enzyme catalyses uridine(55) in tRNA = pseudouridine(55) in tRNA. In terms of biological role, responsible for synthesis of pseudouridine from uracil-55 in the psi GC loop of transfer RNAs. This Aromatoleum aromaticum (strain DSM 19018 / LMG 30748 / EbN1) (Azoarcus sp. (strain EbN1)) protein is tRNA pseudouridine synthase B.